A 1969-amino-acid chain; its full sequence is Protein mono-ADP-ribosyltransferase PARP4 (1969 aa).

The BRCT domain occupies 1-94; it reads MTLGIFANCI…RLLDVRNYDP (94 aa). The Nuclear localization signal motif lies at 19–25; sequence PRQQKKK. Positions 92 to 132 are disordered; it reads YDPLSPAPAAPPAERSRSEVQSEYLPSDNTPEKENTEVTEV. Positions 235–363 constitute a PARP alpha-helical domain; the sequence is SEKLQALLLE…ETNLSKPNPP (129 aa). The region spanning 362 to 566 is the PARP catalytic domain; it reads PPSLAKYRAL…FCTPGDQIKE (205 aa). The 129-residue stretch at 600-728 folds into the VIT domain; sequence TNIKAGLQDA…KVLIKITYIT (129 aa). Positions 869–1039 constitute a VWFA domain; it reads EVIICLDCSS…KQIEAQMTRI (171 aa). Residue Ser1229 is modified to Phosphoserine. Positions 1230-1242 match the Nuclear localization signal motif; it reads DGHGVLQPVSVSS. Pro residues-rich tracts occupy residues 1372 to 1387, 1402 to 1417, 1425 to 1444, 1485 to 1513, and 1521 to 1540; these read PPHPLGGTHPPPPLPL, HPPPPLFGGTLIPPPS, LPPPPPLPGGTHIPPPPPIP, and LPPPPLLPAGTHIPPPPPITGSTHPPPPS. Residues 1372–1608 form a disordered region; it reads PPHPLGGTHP…AGTQFSLSPI (237 aa). An FH1 domain is found at 1443 to 1541; sequence IPGGTLIPPS…HIPPPPPIPG (99 aa). Low complexity predominate over residues 1541–1556; sequence GGTLIPSPSSLFGGTH. The span at 1557-1585 shows a compositional bias: pro residues; sequence LPPPPLLPAGTHIPPPPPITGSTHPPPPS. An interaction with the major vault protein region spans residues 1808 to 1969; sequence FCDEDQESPV…LHRILYYSQG (162 aa).

It belongs to the ARTD/PARP family. In terms of assembly, component of the vault ribonucleoprotein particle, at least composed of MVP, PARP4 and one or more vault RNAs (vRNAs). Interacts with TEP1.

It localises to the cytoplasm. It is found in the nucleus. The catalysed reaction is L-aspartyl-[protein] + NAD(+) = 4-O-(ADP-D-ribosyl)-L-aspartyl-[protein] + nicotinamide. It catalyses the reaction L-glutamyl-[protein] + NAD(+) = 5-O-(ADP-D-ribosyl)-L-glutamyl-[protein] + nicotinamide. Mono-ADP-ribosyltransferase that mediates mono-ADP-ribosylation of target proteins. This is Protein mono-ADP-ribosyltransferase PARP4 from Mus musculus (Mouse).